The chain runs to 141 residues: Hemoglobin subunit alpha-1/2 (141 aa).

A Globin domain is found at 1–141 (VLSAABKSBV…VSTVLTSKYR (141 aa)). Position 3 is a phosphoserine (serine 3). 2 positions are modified to N6-succinyllysine: lysine 7 and lysine 11. Lysine 16 bears the N6-acetyllysine; alternate mark. At lysine 16 the chain carries N6-succinyllysine; alternate. A Phosphotyrosine modification is found at tyrosine 24. Phosphoserine is present on serine 35. The residue at position 40 (lysine 40) is an N6-succinyllysine. A Phosphoserine modification is found at serine 49. Histidine 58 provides a ligand contact to O2. Histidine 87 contacts heme b. At serine 102 the chain carries Phosphoserine. Threonine 108 carries the phosphothreonine modification. Serine 124 carries the post-translational modification Phosphoserine. Threonine 134 and threonine 137 each carry phosphothreonine. Serine 138 bears the Phosphoserine mark.

It belongs to the globin family. As to quaternary structure, heterotetramer of two alpha chains and two beta chains. In terms of tissue distribution, red blood cells.

Involved in oxygen transport from the lung to the various peripheral tissues. In Odocoileus virginianus virginianus (Virginia white-tailed deer), this protein is Hemoglobin subunit alpha-1/2.